Reading from the N-terminus, the 204-residue chain is Putative AgrB-like protein (204 aa).

The next 5 membrane-spanning stretches (helical) occupy residues 51–73 (VYGI…SYLW), 87–107 (LNCT…FQNI), 111–131 (NWIV…FAPA), 151–168 (AMIG…IPFA), and 173–190 (LIMV…PLTY).

Belongs to the AgrB family.

It localises to the cell membrane. May be involved in the proteolytic processing of a quorum sensing system signal molecule precursor. In Listeria innocua serovar 6a (strain ATCC BAA-680 / CLIP 11262), this protein is Putative AgrB-like protein.